Reading from the N-terminus, the 230-residue chain is Ribonuclease 3 (230 aa).

One can recognise an RNase III domain in the interval 19 to 134 (ELLTIALTHR…LLGAIYLEHG (116 aa)). Glu44 contributes to the Mg(2+) binding site. The active site involves Asp48. Asp120 and Glu123 together coordinate Mg(2+). One can recognise a DRBM domain in the interval 161–229 (DWKSSLQELT…AASAYKTLDE (69 aa)).

It belongs to the ribonuclease III family. As to quaternary structure, homodimer. It depends on Mg(2+) as a cofactor.

It is found in the cytoplasm. It carries out the reaction Endonucleolytic cleavage to 5'-phosphomonoester.. Digests double-stranded RNA. Involved in the processing of primary rRNA transcript to yield the immediate precursors to the all rRNAs (23S, 16S and 5S). Processes some mRNAs, and tRNAs when they are encoded in the rRNA operon. Processes pre-crRNA and tracrRNA of type II CRISPR loci if present in the organism. This is Ribonuclease 3 (rnc) from Mycolicibacterium smegmatis (strain ATCC 700084 / mc(2)155) (Mycobacterium smegmatis).